The chain runs to 212 residues: Uridine kinase (212 aa).

12–19 (GGSGGGKT) is an ATP binding site.

Belongs to the uridine kinase family.

The protein localises to the cytoplasm. The enzyme catalyses uridine + ATP = UMP + ADP + H(+). The catalysed reaction is cytidine + ATP = CMP + ADP + H(+). It functions in the pathway pyrimidine metabolism; CTP biosynthesis via salvage pathway; CTP from cytidine: step 1/3. It participates in pyrimidine metabolism; UMP biosynthesis via salvage pathway; UMP from uridine: step 1/1. The protein is Uridine kinase of Streptococcus pneumoniae serotype 2 (strain D39 / NCTC 7466).